A 448-amino-acid polypeptide reads, in one-letter code: Phosphoglucosamine mutase (448 aa).

Catalysis depends on serine 100, which acts as the Phosphoserine intermediate. 4 residues coordinate Mg(2+): serine 100, aspartate 240, aspartate 242, and aspartate 244. Serine 100 carries the phosphoserine modification.

Belongs to the phosphohexose mutase family. It depends on Mg(2+) as a cofactor. Activated by phosphorylation.

The enzyme catalyses alpha-D-glucosamine 1-phosphate = D-glucosamine 6-phosphate. Functionally, catalyzes the conversion of glucosamine-6-phosphate to glucosamine-1-phosphate. The polypeptide is Phosphoglucosamine mutase (Clostridium perfringens (strain SM101 / Type A)).